The primary structure comprises 671 residues: Kinesin-like protein KIF2C (671 aa).

Residues 1–200 (MIDFDDVAAI…CHPLTMTDPI (200 aa)) are globular. Positions 36–62 (KQKRRSVNSKIPAPKESLRTRSTRMST) are disordered. Ser-41 is modified (phosphoserine; by AURKB). Positions 44–47 (SKIP) match the Microtubule tip localization signal motif. Phosphoserine occurs at positions 52, 57, 61, 112, 121, 133, and 138. The negative regulator of microtubule-binding stretch occupies residues 153–184 (EKKAQNSEMRMKRAQEYDSSFPNWEFARMIKE). 2 cysteine pairs are disulfide-bonded: Cys-191-Cys-233 and Cys-290-Cys-506. The region spanning 204-534 (RICVCVRKRP…LRYADRVKEL (331 aa)) is the Kinesin motor domain. ATP is bound at residue 294 to 301 (GQTGSGKT). Ser-465, Ser-567, and Ser-579 each carry phosphoserine. Residues 564–604 (GNLSKEEEELSSQMSSFNEAMTQIRELEERAVEELKEIIQQ) adopt a coiled-coil conformation.

This sequence belongs to the TRAFAC class myosin-kinesin ATPase superfamily. Kinesin family. MCAK/KIF2 subfamily. In terms of assembly, interacts with CENPH. Interacts with MTUS2/TIP150; the interaction is direct. Interacts with MAPRE1; the interaction is direct, regulated by phosphorylation and is probably required for targeting to growing microtubule plus ends. Interacts with KIF18B at microtubule tips; this interaction increases the affinity of both partners for microtubule plus ends and is required for robust microtubule depolymerization. Phosphorylation by AURKA or AURKB strongly reduces KIF18B-binding. Post-translationally, phosphorylation by AURKB, regulates association with centromeres and kinetochores and the microtubule depolymerization activity. Ubiquitinated.

Its subcellular location is the cytoplasm. It localises to the cytoskeleton. The protein localises to the nucleus. It is found in the chromosome. The protein resides in the centromere. Its subcellular location is the kinetochore. Its function is as follows. In complex with KIF18B, constitutes the major microtubule plus-end depolymerizing activity in mitotic cells. Regulates the turnover of microtubules at the kinetochore and functions in chromosome segregation during mitosis. Plays a role in chromosome congression and is required for the lateral to end-on conversion of the chromosome-microtubule attachment. The protein is Kinesin-like protein KIF2C (KIF2C) of Macaca fascicularis (Crab-eating macaque).